A 71-amino-acid chain; its full sequence is Small ribosomal subunit protein bS21 (71 aa).

The protein belongs to the bacterial ribosomal protein bS21 family.

The sequence is that of Small ribosomal subunit protein bS21 from Buchnera aphidicola subsp. Baizongia pistaciae (strain Bp).